The primary structure comprises 330 residues: Phosphate acyltransferase (330 aa).

This sequence belongs to the PlsX family. In terms of assembly, homodimer. Probably interacts with PlsY.

The protein localises to the cytoplasm. It catalyses the reaction a fatty acyl-[ACP] + phosphate = an acyl phosphate + holo-[ACP]. Its pathway is lipid metabolism; phospholipid metabolism. Catalyzes the reversible formation of acyl-phosphate (acyl-PO(4)) from acyl-[acyl-carrier-protein] (acyl-ACP). This enzyme utilizes acyl-ACP as fatty acyl donor, but not acyl-CoA. The chain is Phosphate acyltransferase from Lactobacillus delbrueckii subsp. bulgaricus (strain ATCC BAA-365 / Lb-18).